The primary structure comprises 466 residues: Ribosome biogenesis protein YTM1 (466 aa).

The segment at 8–95 (IKINFFTNEE…EASLNLEYTR (88 aa)) is ubiquitin-like (UBL) domain. Residues 105–466 (SFNNDDWISS…QINKGSDITK (362 aa)) are sufficient for interaction with ERB1 and association with 66S pre-ribosomes. WD repeat units follow at residues 120 to 159 (PLSA…EKQY), 161 to 199 (GHSG…NIED), 214 to 253 (GHKA…MTTI), 291 to 331 (GHSQ…CVDT), 333 to 372 (TTGY…TTTE), 381 to 421 (GHTN…SLYT), and 431 to 466 (KGQD…DITK).

This sequence belongs to the WD repeat WDR12/YTM1 family. Component of the NOP7 complex, composed of ERB1, NOP7 and YTM1. The complex is held together by ERB1, which interacts with NOP7 via its N-terminal domain and with YTM1 via a high-affinity interaction between the seven-bladed beta-propeller domains of the 2 proteins. The NOP7 complex associates with the 66S pre-ribosome. Interacts (via UBL domain) with MDN1 (via VWFA/MIDAS domain).

It localises to the nucleus. It is found in the nucleolus. Its subcellular location is the nucleoplasm. Component of the NOP7 complex, which is required for maturation of the 25S and 5.8S ribosomal RNAs and formation of the 60S ribosome. This is Ribosome biogenesis protein YTM1 from Debaryomyces hansenii (strain ATCC 36239 / CBS 767 / BCRC 21394 / JCM 1990 / NBRC 0083 / IGC 2968) (Yeast).